A 382-amino-acid chain; its full sequence is D-galactonate dehydratase (382 aa).

Aspartate 183 contributes to the Mg(2+) binding site. The Proton donor role is filled by histidine 185. Mg(2+) contacts are provided by glutamate 209 and glutamate 235. Histidine 285 acts as the Proton acceptor in catalysis.

The protein belongs to the mandelate racemase/muconate lactonizing enzyme family. GalD subfamily. It depends on Mg(2+) as a cofactor.

The catalysed reaction is D-galactonate = 2-dehydro-3-deoxy-D-galactonate + H2O. The protein operates within carbohydrate acid metabolism; D-galactonate degradation; D-glyceraldehyde 3-phosphate and pyruvate from D-galactonate: step 1/3. Its function is as follows. Catalyzes the dehydration of D-galactonate to 2-keto-3-deoxy-D-galactonate. The polypeptide is D-galactonate dehydratase (Escherichia coli O9:H4 (strain HS)).